The chain runs to 263 residues: MFDIGVNLTSSQFSRDHDEVVARARAAGVHGMLLTGTNLPESQQAQRMASHYSGCWSTAGVHPHDGSSWSPAVAEAIYTLAREPQVVAIGECGLDFNRNFSTPQEQEAAFSAQLALAAELAMPVFLHCRDAHDRFLALLKPWLEKIPGAVLHCFTGSRSEVQECLDLGLFIGITGWVCDERRGLELRELLPAIPAERLLLETDAPYLLPRDLKPRPASRRNEPAYLPHILASVASWRGEETQWLEAQTDANVRTLFGIDVNGV.

Positions 91, 127, and 152 each coordinate a divalent metal cation.

This sequence belongs to the metallo-dependent hydrolases superfamily. TatD-type hydrolase family. TatD subfamily. As to quaternary structure, monomer. It depends on Mg(2+) as a cofactor.

It localises to the cytoplasm. In terms of biological role, 3'-5' exonuclease that prefers single-stranded DNA and RNA. May play a role in the H(2)O(2)-induced DNA damage repair. The chain is 3'-5' ssDNA/RNA exonuclease TatD from Klebsiella pneumoniae (strain 342).